The chain runs to 1499 residues: Ring canal kelch homolog (1499 aa).

Residues 56-66 (LDESSQKQLPR) are compositionally biased toward polar residues. The segment at 56-75 (LDESSQKQLPRSNGKEKTTG) is disordered. Positions 100–166 (CDVVLVAEGI…VYRAVVEVTE (67 aa)) constitute a BTB domain. Kelch repeat units follow at residues 351 to 396 (VLLV…VLGD), 397 to 443 (KVYA…VLNN), 444 to 490 (CIYA…VVNG), 492 to 539 (LYAV…VLDN), 541 to 586 (LYAV…AHNG), and 588 to 634 (LYVV…MIDK). Position 637 (selenocysteine 637) is a non-standard amino acid, selenocysteine. Disordered regions lie at residues 679 to 714 (AGQA…GNNV), 750 to 786 (LQYA…GGGG), 825 to 856 (AGYD…CPNL), 984 to 1017 (NQSN…SSSV), 1033 to 1085 (SMNN…GNGG), 1107 to 1160 (ASTS…PVDV), 1301 to 1321 (QVGR…PLRT), and 1334 to 1499 (ARSP…TASE). A compositionally biased stretch (low complexity) spans 698–713 (NPEPANSNNSAPNGNN). The span at 776 to 786 (GERGAVGGGGG) shows a compositional bias: gly residues. Residues 986-1003 (SNSSSASSASPYGANGPA) are compositionally biased toward low complexity. Residues 1004–1017 (TTSQPNPTKDSSSV) are compositionally biased toward polar residues. Residues 1040-1054 (SSAAHGTASGSAPAA) are compositionally biased toward low complexity. Over residues 1065–1085 (ISGGASGGGAGGAGSSGGNGG) the composition is skewed to gly residues. Residues 1107-1119 (ASTSTTLGGKSTG) are compositionally biased toward low complexity. Residues 1135 to 1147 (GPSDPTAGTSAPQ) are compositionally biased toward polar residues. A compositionally biased stretch (basic and acidic residues) spans 1348–1359 (NREKPREVRRIT). Low complexity predominate over residues 1401–1410 (SSASSSSDSD). The span at 1460-1471 (VGSSSNETSDSL) shows a compositional bias: polar residues.

The protein resides in the cytoplasm. It is found in the cytoskeleton. In terms of biological role, may play a role in organizing the actin cytoskeleton. In Anopheles stephensi (Indo-Pakistan malaria mosquito), this protein is Ring canal kelch homolog.